Consider the following 343-residue polypeptide: Heat-inducible transcription repressor HrcA (343 aa).

The protein belongs to the HrcA family.

Negative regulator of class I heat shock genes (grpE-dnaK-dnaJ and groELS operons). Prevents heat-shock induction of these operons. This is Heat-inducible transcription repressor HrcA from Clostridium botulinum (strain Alaska E43 / Type E3).